Consider the following 438-residue polypeptide: Adenylosuccinate synthetase (438 aa).

GTP-binding positions include 12 to 18 and 40 to 42; these read GDEGKGK and GHT. The active-site Proton acceptor is the D13. Positions 13 and 40 each coordinate Mg(2+). Residues 13 to 16, 38 to 41, T128, R142, Q223, T238, and R302 each bind IMP; these read DEGK and NAGH. H41 functions as the Proton donor in the catalytic mechanism. A substrate-binding site is contributed by 298–304; it reads TTTGRPR. Residues R304, 330-332, and 412-414 contribute to the GTP site; these read KLD and GVG.

This sequence belongs to the adenylosuccinate synthetase family. In terms of assembly, homodimer. The cofactor is Mg(2+).

The protein resides in the cytoplasm. The catalysed reaction is IMP + L-aspartate + GTP = N(6)-(1,2-dicarboxyethyl)-AMP + GDP + phosphate + 2 H(+). It functions in the pathway purine metabolism; AMP biosynthesis via de novo pathway; AMP from IMP: step 1/2. Functionally, plays an important role in the de novo pathway of purine nucleotide biosynthesis. Catalyzes the first committed step in the biosynthesis of AMP from IMP. The protein is Adenylosuccinate synthetase of Leifsonia xyli subsp. xyli (strain CTCB07).